Here is a 171-residue protein sequence, read N- to C-terminus: Large ribosomal subunit protein uL10 (171 aa).

Belongs to the universal ribosomal protein uL10 family. As to quaternary structure, part of the ribosomal stalk of the 50S ribosomal subunit. The N-terminus interacts with L11 and the large rRNA to form the base of the stalk. The C-terminus forms an elongated spine to which L12 dimers bind in a sequential fashion forming a multimeric L10(L12)X complex.

Its function is as follows. Forms part of the ribosomal stalk, playing a central role in the interaction of the ribosome with GTP-bound translation factors. The sequence is that of Large ribosomal subunit protein uL10 from Zymomonas mobilis subsp. mobilis (strain ATCC 31821 / ZM4 / CP4).